The following is a 271-amino-acid chain: N-acetyltransferase ECO1 (271 aa).

The CCHH-type zinc finger occupies 26–50 (VKCPKCSITYSTNSPSDLVQHKRYH). Residues 109–271 (VMISPKKANE…SGKLLIPCYI (163 aa)) form the N-acetyltransferase domain.

This sequence belongs to the acetyltransferase family. ECO subfamily.

It localises to the nucleus. Probable acetyltransferase required for the establishment of sister chromatid cohesion and couple the processes of cohesion and DNA replication to ensure that only sister chromatids become paired together. In contrast to the structural cohesins, the deposition and establishment factors are required only during S phase. Acts by acetylating the cohesin complex component SMC3. This is N-acetyltransferase ECO1 (ECO1) from Kluyveromyces lactis (strain ATCC 8585 / CBS 2359 / DSM 70799 / NBRC 1267 / NRRL Y-1140 / WM37) (Yeast).